A 396-amino-acid chain; its full sequence is 1-deoxy-D-xylulose 5-phosphate reductoisomerase (396 aa).

Threonine 10, glycine 11, serine 12, isoleucine 13, and asparagine 123 together coordinate NADPH. 1-deoxy-D-xylulose 5-phosphate is bound at residue lysine 124. Glutamate 125 provides a ligand contact to NADPH. Position 149 (aspartate 149) interacts with Mn(2+). 1-deoxy-D-xylulose 5-phosphate contacts are provided by serine 150, glutamate 151, serine 185, and histidine 208. Glutamate 151 lines the Mn(2+) pocket. Glycine 214 provides a ligand contact to NADPH. The 1-deoxy-D-xylulose 5-phosphate site is built by serine 221, asparagine 226, lysine 227, and glutamate 230. Glutamate 230 is a binding site for Mn(2+).

It belongs to the DXR family. It depends on Mg(2+) as a cofactor. Mn(2+) is required as a cofactor.

The catalysed reaction is 2-C-methyl-D-erythritol 4-phosphate + NADP(+) = 1-deoxy-D-xylulose 5-phosphate + NADPH + H(+). It functions in the pathway isoprenoid biosynthesis; isopentenyl diphosphate biosynthesis via DXP pathway; isopentenyl diphosphate from 1-deoxy-D-xylulose 5-phosphate: step 1/6. Catalyzes the NADPH-dependent rearrangement and reduction of 1-deoxy-D-xylulose-5-phosphate (DXP) to 2-C-methyl-D-erythritol 4-phosphate (MEP). This is 1-deoxy-D-xylulose 5-phosphate reductoisomerase from Shewanella baltica (strain OS155 / ATCC BAA-1091).